A 167-amino-acid polypeptide reads, in one-letter code: Multifunctional Ser/Thr-tRNA deacylase ProXp-y (167 aa).

It is found in the cytoplasm. It carries out the reaction L-seryl-tRNA(Lys) + H2O = tRNA(Lys) + L-serine. The catalysed reaction is L-threonyl-tRNA(Lys) + H2O = tRNA(Lys) + L-threonine. It catalyses the reaction L-homoseryl-tRNA(Lys) + H2O = tRNA(Lys) + L-homoserine + H(+). The enzyme catalyses L-seryl-tRNA(Ala) + H2O = tRNA(Ala) + L-serine. It carries out the reaction L-homoseryl-tRNA(Ser) + H2O = tRNA(Ser) + L-homoserine + H(+). The catalysed reaction is L-seryl-tRNA(Thr) + H2O = tRNA(Thr) + L-serine. It catalyses the reaction L-threonyl-tRNA(Ile) + H2O = tRNA(Ile) + L-threonine. The enzyme catalyses L-threonyl-tRNA(Val) + H2O = tRNA(Val) + L-threonine. It carries out the reaction L-threonyl-tRNA(Ser) + H2O = tRNA(Ser) + L-threonine. Functionally, an aminoacyl-tRNA editing enzyme that deacylates Ser-tRNA and/or Thr-tRNA mischarged by lysyl-tRNA synthetase (LysRS), threonyl-tRNA synthetase (ThrRS), seryl-tRNA synthetase (SerRS), alanyl-tRNA synthetase (AlaRS), valyl-tRNA synthetase (ValRS) and isoleucyl-tRNA synthetase (IleRS) in vitro. Also deacylates mischarged Hse-tRNA(Lys) and Hse-tRNA(Ser), and cognate Ser-tRNA(Ser) and Thr-tRNA(Thr) in vitro. The presence of cognate ThrRS abolishes the Thr-tRNA(Thr) deacylase activity, hence this activity is not applicable physiologically. Not able to remove the amino acid moiety from cognate Val-tRNA(Val), Ile-tRNA(Ile), Lys-tRNA(Lys), Ala-tRNA(Ala) or Pro-tRNA(Pro), or from incorrectly charged Ala-tRNA(Pro), Cys-tRNA(Pro) or Leu-tRNA(Pro) in vitro. May be required in vivo to prevent mistranslation and to maintain growth when the error prone stress-inducible lysyl-tRNA synthetase (LysU) is expressed under environmental pressure. This is Multifunctional Ser/Thr-tRNA deacylase ProXp-y from Escherichia coli O157:H7.